The chain runs to 619 residues: Chaperone protein HscA homolog (619 aa).

This sequence belongs to the heat shock protein 70 family.

Functionally, chaperone involved in the maturation of iron-sulfur cluster-containing proteins. Has a low intrinsic ATPase activity which is markedly stimulated by HscB. This Acinetobacter baumannii (strain ATCC 17978 / DSM 105126 / CIP 53.77 / LMG 1025 / NCDC KC755 / 5377) protein is Chaperone protein HscA homolog.